The sequence spans 557 residues: Formate--tetrahydrofolate ligase 2 (557 aa).

66–73 contacts ATP; sequence TPAGEGKT.

Belongs to the formate--tetrahydrofolate ligase family.

It carries out the reaction (6S)-5,6,7,8-tetrahydrofolate + formate + ATP = (6R)-10-formyltetrahydrofolate + ADP + phosphate. The protein operates within one-carbon metabolism; tetrahydrofolate interconversion. This is Formate--tetrahydrofolate ligase 2 from Streptococcus pyogenes serotype M12 (strain MGAS9429).